We begin with the raw amino-acid sequence, 83 residues long: MGSSKLMVTCIVVAMLTISCDILSVEMGISVQALPPTCGPDCTGRFMNQDCSKYCAALSYKHGVCILFRGLPPRTSTLRCCCG.

The signal sequence occupies residues 1-24 (MGSSKLMVTCIVVAMLTISCDILS). Intrachain disulfides connect cysteine 38–cysteine 82, cysteine 42–cysteine 65, cysteine 51–cysteine 80, and cysteine 55–cysteine 81.

The protein belongs to the DEFL family.

The protein localises to the secreted. The sequence is that of Putative defensin-like protein 67 from Arabidopsis thaliana (Mouse-ear cress).